A 132-amino-acid chain; its full sequence is Small ribosomal subunit protein uS8 (132 aa).

The protein belongs to the universal ribosomal protein uS8 family. In terms of assembly, part of the 30S ribosomal subunit. Contacts proteins S5 and S12.

In terms of biological role, one of the primary rRNA binding proteins, it binds directly to 16S rRNA central domain where it helps coordinate assembly of the platform of the 30S subunit. This Streptococcus equi subsp. equi (strain 4047) protein is Small ribosomal subunit protein uS8.